The primary structure comprises 448 residues: Methionine aminopeptidase 2 (448 aa).

The segment at 1-94 (MAAQVTDALK…PRVLLSNLFP (94 aa)) is disordered. Over residues 37 to 50 (AEAEDSDDDDEEPV) the composition is skewed to acidic residues. The span at 61 to 74 (KKKRKRKKKPKKKA) shows a compositional bias: basic residues. Position 201 (H201) interacts with substrate. A divalent metal cation contacts are provided by D221, D232, and H301. Residue H309 coordinates substrate. E334 and E429 together coordinate a divalent metal cation.

It belongs to the peptidase M24A family. Methionine aminopeptidase eukaryotic type 2 subfamily. It depends on Co(2+) as a cofactor. Zn(2+) serves as cofactor. Mn(2+) is required as a cofactor. The cofactor is Fe(2+).

It localises to the cytoplasm. The catalysed reaction is Release of N-terminal amino acids, preferentially methionine, from peptides and arylamides.. Cotranslationally removes the N-terminal methionine from nascent proteins. The N-terminal methionine is often cleaved when the second residue in the primary sequence is small and uncharged (Met-Ala-, Cys, Gly, Pro, Ser, Thr, or Val). The chain is Methionine aminopeptidase 2 from Botryotinia fuckeliana (strain B05.10) (Noble rot fungus).